Consider the following 227-residue polypeptide: Lipoprotein-releasing system ATP-binding protein LolD (227 aa).

In terms of domain architecture, ABC transporter spans 7–227; that stretch reads LQLTGVERHY…TISDGKIVDF (221 aa). 43–50 provides a ligand contact to ATP; sequence APSGTGKS.

This sequence belongs to the ABC transporter superfamily. Lipoprotein translocase (TC 3.A.1.125) family. In terms of assembly, the complex is composed of two ATP-binding proteins (LolD) and two transmembrane proteins (LolC and LolE).

It is found in the cell inner membrane. Part of the ABC transporter complex LolCDE involved in the translocation of mature outer membrane-directed lipoproteins, from the inner membrane to the periplasmic chaperone, LolA. Responsible for the formation of the LolA-lipoprotein complex in an ATP-dependent manner. The chain is Lipoprotein-releasing system ATP-binding protein LolD from Rhizobium johnstonii (strain DSM 114642 / LMG 32736 / 3841) (Rhizobium leguminosarum bv. viciae).